The following is an 814-amino-acid chain: ATP-dependent RNA helicase dbp-7 (814 aa).

The segment at 26–102 is disordered; it reads GGRWRDRVKA…PPPPPTHAMK (77 aa). Basic and acidic residues-rich tracts occupy residues 28–42 and 69–78; these read RWRDRVKAQKGEKGG and QRTEDGDSGR. The short motif at 145–174 is the Q motif element; sequence ENFLSLGLSRRVSQHLATKLEMKAPTAIQK. The region spanning 178–384 is the Helicase ATP-binding domain; the sequence is PQLVKEDSDA…EISLEDAVHI (207 aa). Residue 191–198 participates in ATP binding; sequence AETGSGKT. The DEAD box motif lies at 313-316; the sequence is DEGD. In terms of domain architecture, Helicase C-terminal spans 422-622; sequence RLVTLIALLK…GFATNINVPG (201 aa). Disordered stretches follow at residues 464–483, 662–695, and 741–795; these read TPRAEPEPKPEGEAPTKPNI, ESKSEKFAASKQGKKGKKDAKKDENKTPDNPLLV, and GIGG…AGRR. Residues 467 to 477 show a composition bias toward basic and acidic residues; that stretch reads AEPEPKPEGEA. Residues 779-790 are compositionally biased toward acidic residues; the sequence is DDDERDFGAADE.

This sequence belongs to the DEAD box helicase family. DDX31/DBP7 subfamily.

The protein resides in the nucleus. It is found in the nucleolus. The enzyme catalyses ATP + H2O = ADP + phosphate + H(+). Its function is as follows. ATP-binding RNA helicase involved in the biogenesis of 60S ribosomal subunits and is required for the normal formation of 25S and 5.8S rRNAs. This is ATP-dependent RNA helicase dbp-7 (dbp-7) from Neurospora crassa (strain ATCC 24698 / 74-OR23-1A / CBS 708.71 / DSM 1257 / FGSC 987).